The sequence spans 75 residues: MANLPKEQKLLFQGKVTHVFNAQEYEVTLENGIKLNCHIAGKMKIHHIKIIIGDMVKVEISPYDLSKGRIVYRFK.

In terms of domain architecture, S1-like spans Met1–Lys75.

Belongs to the IF-1 family. In terms of assembly, component of the 30S ribosomal translation pre-initiation complex which assembles on the 30S ribosome in the order IF-2 and IF-3, IF-1 and N-formylmethionyl-tRNA(fMet); mRNA recruitment can occur at any time during PIC assembly.

Its subcellular location is the cytoplasm. Functionally, one of the essential components for the initiation of protein synthesis. Stabilizes the binding of IF-2 and IF-3 on the 30S subunit to which N-formylmethionyl-tRNA(fMet) subsequently binds. Helps modulate mRNA selection, yielding the 30S pre-initiation complex (PIC). Upon addition of the 50S ribosomal subunit IF-1, IF-2 and IF-3 are released leaving the mature 70S translation initiation complex. The sequence is that of Translation initiation factor IF-1 from Mesomycoplasma hyopneumoniae (strain 232) (Mycoplasma hyopneumoniae).